The sequence spans 834 residues: Protein EFR3 homolog cmp44E (834 aa).

The HEAT repeat unit spans residues 120-156; it reads NLFVESFLRMVQKLLEDSNPNLKIMATNSFVKFANIN. A helical membrane pass occupies residues 595–612; that stretch reads LHAISIGLLVLISRVSGI.

It belongs to the EFR3 family. In terms of tissue distribution, expression during embryogenesis is ubiquitous with notably higher levels in the CNS and brain.

The protein resides in the membrane. In terms of biological role, an essential gene required for embryogenesis; required for cell viability. This chain is Protein EFR3 homolog cmp44E (stmA), found in Drosophila melanogaster (Fruit fly).